A 118-amino-acid polypeptide reads, in one-letter code: Class I hydrophobin hum2 (118 aa).

Residues 1–19 (MQFKTIFATLAAFAAVASA) form the signal peptide. 4 cysteine pairs are disulfide-bonded: cysteine 33-cysteine 98, cysteine 40-cysteine 92, cysteine 41-cysteine 74, and cysteine 99-cysteine 112.

Belongs to the fungal hydrophobin family. Self-assembles to form functional amyloid fibrils called rodlets. Self-assembly into fibrillar rodlets occurs spontaneously at hydrophobic:hydrophilic interfaces and the rodlets further associate laterally to form amphipathic monolayers.

It is found in the secreted. The protein resides in the cell wall. In terms of biological role, aerial growth, conidiation, and dispersal of filamentous fungi in the environment rely upon a capability of their secreting small amphipathic proteins called hydrophobins (HPBs) with low sequence identity. Class I can self-assemble into an outermost layer of rodlet bundles on aerial cell surfaces, conferring cellular hydrophobicity that supports fungal growth, development and dispersal; whereas Class II form highly ordered films at water-air interfaces through intermolecular interactions but contribute nothing to the rodlet structure. Hum2 is a class I hydrophobin which that plays a role in, but seems not to be crucial for the formation of aerial hyphae. Hydrophobins of Mycosarcoma maydis have been functionally replaced, at least partially, by repellents. The polypeptide is Class I hydrophobin hum2 (Mycosarcoma maydis (Corn smut fungus)).